An 817-amino-acid polypeptide reads, in one-letter code: Kinesin-like protein 2 (817 aa).

A disordered region spans residues 1–155; that stretch reads MEEEGHKSLT…YNDEKSVNAS (155 aa). Low complexity predominate over residues 8-23; it reads SLTSHLPQSSSSLSQS. Polar residues predominate over residues 39 to 60; it reads IKTNSSSSNILKPRLSLQNEVN. Low complexity predominate over residues 76–86; it reads SLASVKSSSLA. Residues 106–116 show a composition bias toward polar residues; it reads PISSRSVSASS. Positions 122–132 are enriched in low complexity; the sequence is ASAVSSSLNSS. Residues 155 to 242 adopt a coiled-coil conformation; the sequence is SALRTTEDRL…VSQKGMESLE (88 aa). The ATP site is built by asparagine 473, arginine 475, arginine 479, glutamate 543, glycine 566, serine 567, glycine 568, lysine 569, threonine 570, and threonine 778. Positions 473–807 constitute a Kinesin motor domain; the sequence is NIRVFCRVRP…LRFATKVNNT (335 aa).

It belongs to the TRAFAC class myosin-kinesin ATPase superfamily. Kinesin family. NCD subfamily.

Its subcellular location is the cytoplasm. It is found in the cytoskeleton. The protein localises to the spindle. The protein resides in the nucleus. It carries out the reaction ATP + H2O = ADP + phosphate + H(+). It catalyses the reaction ATP + H2O + a kinesin associated with a microtubule at position (n) = ADP + phosphate + a kinesin associated with a microtubule at position (n-1, toward the minus end).. In terms of biological role, minus end-directed microtubule (MT) motor that is involved in spindle microtubule shortening, kinetochore capture, and polarization of cytoplasmic microtubules. During mitosis, promotes spindle microtubule shortening by depolymerization. During metaphase, involved in the recapture of kinetochores displaced from the spindle and their transport towards the spindle pole body; promotes transport both by microtubule end-on pulling and by lateral sliding along the side of the microtubule. During interphase, required for the polarization of cytoplasmic microtubules where it orients the microtubule plus ends toward the cell ends and the minus ends toward the cell center. Required for karyogamy. The sequence is that of Kinesin-like protein 2 from Schizosaccharomyces pombe (strain 972 / ATCC 24843) (Fission yeast).